Consider the following 100-residue polypeptide: Apolipoprotein C-II (100 aa).

The signal sequence occupies residues 1 to 22 (MSSQFLLAFFLVLLVLGYEVQG). The interval 66–74 (SVDEKLRDM) is lipid binding. A lipoprotein lipase cofactor region spans residues 78–100 (SSAAMSTYAGIFTDQLFTLLKGE).

This sequence belongs to the apolipoprotein C2 family. In terms of processing, proapolipoprotein C-II is synthesized as a sialic acid containing glycoprotein which is subsequently desialylated prior to its proteolytic processing. Proapolipoprotein C-II, the major form found in plasma undergoes proteolytic cleavage of its N-terminal hexapeptide to generate the mature form apolipoprotein C-II, which occurs as the minor form in plasma.

It localises to the secreted. Component of chylomicrons, very low-density lipoproteins (VLDL), low-density lipoproteins (LDL), and high-density lipoproteins (HDL) in plasma. Plays an important role in lipoprotein metabolism as an activator of lipoprotein lipase. This Cricetulus griseus (Chinese hamster) protein is Apolipoprotein C-II (APOC2).